The following is a 296-amino-acid chain: 2-methylisocitrate lyase (296 aa).

Position 45–47 (45–47 (SGG)) interacts with substrate. Residues Asp-85 and Asp-87 each contribute to the Mg(2+) site. Substrate is bound by residues 123–124 (CG), Arg-158, Glu-188, 210–212 (NIT), Arg-241, and Arg-270.

This sequence belongs to the isocitrate lyase/PEP mutase superfamily. Methylisocitrate lyase family. Homotetramer; dimer of dimers. The cofactor is Mg(2+).

It carries out the reaction (2S,3R)-3-hydroxybutane-1,2,3-tricarboxylate = pyruvate + succinate. The protein operates within organic acid metabolism; propanoate degradation. Involved in the catabolism of short chain fatty acids (SCFA) via the 2-methylcitrate cycle I (propionate degradation route). Catalyzes the thermodynamically favored C-C bond cleavage of (2R,3S)-2-methylisocitrate to yield pyruvate and succinate via an alpha-carboxy-carbanion intermediate. This chain is 2-methylisocitrate lyase, found in Escherichia coli (strain K12).